The chain runs to 381 residues: UDP-N-acetylglucosamine--N-acetylmuramyl-(pentapeptide) pyrophosphoryl-undecaprenol N-acetylglucosamine transferase (381 aa).

Residues 10 to 12 (TGG), Asn124, Arg165, Ser190, Ile245, and Gln290 each bind UDP-N-acetyl-alpha-D-glucosamine. Positions 361–381 (WGSPAGQERPGHGPVRPPDLA) are disordered.

The protein belongs to the glycosyltransferase 28 family. MurG subfamily.

It is found in the cell inner membrane. The catalysed reaction is di-trans,octa-cis-undecaprenyl diphospho-N-acetyl-alpha-D-muramoyl-L-alanyl-D-glutamyl-meso-2,6-diaminopimeloyl-D-alanyl-D-alanine + UDP-N-acetyl-alpha-D-glucosamine = di-trans,octa-cis-undecaprenyl diphospho-[N-acetyl-alpha-D-glucosaminyl-(1-&gt;4)]-N-acetyl-alpha-D-muramoyl-L-alanyl-D-glutamyl-meso-2,6-diaminopimeloyl-D-alanyl-D-alanine + UDP + H(+). Its pathway is cell wall biogenesis; peptidoglycan biosynthesis. Cell wall formation. Catalyzes the transfer of a GlcNAc subunit on undecaprenyl-pyrophosphoryl-MurNAc-pentapeptide (lipid intermediate I) to form undecaprenyl-pyrophosphoryl-MurNAc-(pentapeptide)GlcNAc (lipid intermediate II). The polypeptide is UDP-N-acetylglucosamine--N-acetylmuramyl-(pentapeptide) pyrophosphoryl-undecaprenol N-acetylglucosamine transferase (Anaeromyxobacter sp. (strain Fw109-5)).